A 329-amino-acid chain; its full sequence is Cytosolic Fe-S cluster assembly factor NBP35 (329 aa).

Residues 1–33 (MAPSQVEDISKTELETPEHCPGPESEQAGKEDA) are disordered. Positions 8–18 (DISKTELETPE) are enriched in basic and acidic residues. [4Fe-4S] cluster is bound by residues Cys20, Cys34, Cys37, and Cys43. 74 to 81 (GKGGVGKS) provides a ligand contact to ATP. Cys248 and Cys251 together coordinate [4Fe-4S] cluster.

Belongs to the Mrp/NBP35 ATP-binding proteins family. NUBP1/NBP35 subfamily. Heterotetramer of 2 NBP35 and 2 CFD1 chains. [4Fe-4S] cluster serves as cofactor.

It is found in the cytoplasm. The protein localises to the nucleus. Component of the cytosolic iron-sulfur (Fe/S) protein assembly (CIA) machinery. Required for maturation of extramitochondrial Fe-S proteins. The NBP35-CFD1 heterotetramer forms a Fe-S scaffold complex, mediating the de novo assembly of an Fe-S cluster and its transfer to target apoproteins. Required for biogenesis and export of both ribosomal subunits, which may reflect a role in assembly of the Fe/S clusters in RLI1, a protein which performs rRNA processing and ribosome export. This Debaryomyces hansenii (strain ATCC 36239 / CBS 767 / BCRC 21394 / JCM 1990 / NBRC 0083 / IGC 2968) (Yeast) protein is Cytosolic Fe-S cluster assembly factor NBP35.